Reading from the N-terminus, the 234-residue chain is Enterobactin synthase component D (234 aa).

The Mg(2+) site is built by aspartate 107, glutamate 109, and glutamate 152.

The protein belongs to the P-Pant transferase superfamily. EntD family. EntB, EntD, EntE, and EntF form a multienzyme complex called enterobactin synthase. It depends on Mg(2+) as a cofactor.

The protein resides in the membrane. It catalyses the reaction apo-[aryl-carrier protein] + CoA = holo-[aryl-carrier protein] + adenosine 3',5'-bisphosphate + H(+). It carries out the reaction apo-[peptidyl-carrier protein] + CoA = holo-[peptidyl-carrier protein] + adenosine 3',5'-bisphosphate + H(+). It functions in the pathway siderophore biosynthesis; enterobactin biosynthesis. Its function is as follows. Involved in the biosynthesis of the siderophore enterobactin (enterochelin), which is a macrocyclic trimeric lactone of N-(2,3-dihydroxybenzoyl)-serine. The serine trilactone serves as a scaffolding for the three catechol functionalities that provide hexadentate coordination for the tightly ligated iron(2+) atoms. Plays an essential role in the assembly of the enterobactin by catalyzing the transfer of the 4'-phosphopantetheine (Ppant) moiety from coenzyme A to the apo-domains of both EntB (ArCP domain) and EntF (PCP domain) to yield their holo-forms which make them competent for the activation of 2,3-dihydroxybenzoate (DHB) and L-serine, respectively. The sequence is that of Enterobactin synthase component D from Salmonella typhimurium (strain LT2 / SGSC1412 / ATCC 700720).